Consider the following 156-residue polypeptide: 6,7-dimethyl-8-ribityllumazine synthase (156 aa).

5-amino-6-(D-ribitylamino)uracil-binding positions include phenylalanine 23, 57–59, and 81–83; these read SFE and AVI. Residue 86 to 87 participates in (2S)-2-hydroxy-3-oxobutyl phosphate binding; the sequence is GT. Histidine 89 acts as the Proton donor in catalysis. Residue phenylalanine 114 coordinates 5-amino-6-(D-ribitylamino)uracil. Arginine 128 serves as a coordination point for (2S)-2-hydroxy-3-oxobutyl phosphate.

It belongs to the DMRL synthase family. As to quaternary structure, forms an icosahedral capsid composed of 60 subunits, arranged as a dodecamer of pentamers.

The catalysed reaction is (2S)-2-hydroxy-3-oxobutyl phosphate + 5-amino-6-(D-ribitylamino)uracil = 6,7-dimethyl-8-(1-D-ribityl)lumazine + phosphate + 2 H2O + H(+). Its pathway is cofactor biosynthesis; riboflavin biosynthesis; riboflavin from 2-hydroxy-3-oxobutyl phosphate and 5-amino-6-(D-ribitylamino)uracil: step 1/2. In terms of biological role, catalyzes the formation of 6,7-dimethyl-8-ribityllumazine by condensation of 5-amino-6-(D-ribitylamino)uracil with 3,4-dihydroxy-2-butanone 4-phosphate. This is the penultimate step in the biosynthesis of riboflavin. This chain is 6,7-dimethyl-8-ribityllumazine synthase, found in Alkalilimnicola ehrlichii (strain ATCC BAA-1101 / DSM 17681 / MLHE-1).